The sequence spans 204 residues: Probable nicotinate-nucleotide adenylyltransferase (204 aa).

Belongs to the NadD family.

The catalysed reaction is nicotinate beta-D-ribonucleotide + ATP + H(+) = deamido-NAD(+) + diphosphate. The protein operates within cofactor biosynthesis; NAD(+) biosynthesis; deamido-NAD(+) from nicotinate D-ribonucleotide: step 1/1. Functionally, catalyzes the reversible adenylation of nicotinate mononucleotide (NaMN) to nicotinic acid adenine dinucleotide (NaAD). The polypeptide is Probable nicotinate-nucleotide adenylyltransferase (Mycobacterium sp. (strain JLS)).